We begin with the raw amino-acid sequence, 425 residues long: L-lysine 2,3-aminomutase (425 aa).

Positions 113–325 (HRYPDRVLLL…GLRGHTSGYA (213 aa)) constitute a Radical SAM core domain. 3 residues coordinate [4Fe-4S] cluster: C127, C131, and C134. K339 carries the N6-(pyridoxal phosphate)lysine modification.

The protein belongs to the radical SAM superfamily. KamA family. Homotetramer. It depends on [4Fe-4S] cluster as a cofactor. Pyridoxal 5'-phosphate is required as a cofactor.

The enzyme catalyses L-lysine = (3S)-3,6-diaminohexanoate. It functions in the pathway amino-acid degradation; L-lysine degradation via acetate pathway. In terms of biological role, catalyzes the interconversion of L-alpha-lysine and L-beta-lysine. The polypeptide is L-lysine 2,3-aminomutase (Fusobacterium nucleatum subsp. nucleatum (strain ATCC 25586 / DSM 15643 / BCRC 10681 / CIP 101130 / JCM 8532 / KCTC 2640 / LMG 13131 / VPI 4355)).